The primary structure comprises 286 residues: Bifunctional protein FolD (286 aa).

Residues 165 to 167 and Ser190 each bind NADP(+); that span reads GRS.

It belongs to the tetrahydrofolate dehydrogenase/cyclohydrolase family. In terms of assembly, homodimer.

It carries out the reaction (6R)-5,10-methylene-5,6,7,8-tetrahydrofolate + NADP(+) = (6R)-5,10-methenyltetrahydrofolate + NADPH. The catalysed reaction is (6R)-5,10-methenyltetrahydrofolate + H2O = (6R)-10-formyltetrahydrofolate + H(+). It functions in the pathway one-carbon metabolism; tetrahydrofolate interconversion. In terms of biological role, catalyzes the oxidation of 5,10-methylenetetrahydrofolate to 5,10-methenyltetrahydrofolate and then the hydrolysis of 5,10-methenyltetrahydrofolate to 10-formyltetrahydrofolate. The protein is Bifunctional protein FolD of Paraburkholderia phytofirmans (strain DSM 17436 / LMG 22146 / PsJN) (Burkholderia phytofirmans).